Consider the following 151-residue polypeptide: Small ribosomal subunit protein uS11 (151 aa).

Phosphoserine is present on Ser-16. Residues Lys-61, Lys-63, and Lys-106 each participate in a glycyl lysine isopeptide (Lys-Gly) (interchain with G-Cter in SUMO2) cross-link. A disordered region spans residues 131-151; sequence DVTPIPSDSTRRKGGRRGRRL. Thr-133 bears the Phosphothreonine mark. Position 139 is a phosphoserine (Ser-139). The segment covering 142 to 151 has biased composition (basic residues); sequence RKGGRRGRRL.

It belongs to the universal ribosomal protein uS11 family. As to quaternary structure, component of the small ribosomal subunit. Part of the small subunit (SSU) processome, composed of more than 70 proteins and the RNA chaperone small nucleolar RNA (snoRNA) U3.

It is found in the cytoplasm. The protein localises to the nucleus. Its subcellular location is the nucleolus. Its function is as follows. Component of the small ribosomal subunit. The ribosome is a large ribonucleoprotein complex responsible for the synthesis of proteins in the cell. Part of the small subunit (SSU) processome, first precursor of the small eukaryotic ribosomal subunit. During the assembly of the SSU processome in the nucleolus, many ribosome biogenesis factors, an RNA chaperone and ribosomal proteins associate with the nascent pre-rRNA and work in concert to generate RNA folding, modifications, rearrangements and cleavage as well as targeted degradation of pre-ribosomal RNA by the RNA exosome. The sequence is that of Small ribosomal subunit protein uS11 (Rps14) from Mus musculus (Mouse).